A 172-amino-acid polypeptide reads, in one-letter code: Translation initiation factor IF-3 (172 aa).

The protein belongs to the IF-3 family. As to quaternary structure, monomer.

It is found in the cytoplasm. IF-3 binds to the 30S ribosomal subunit and shifts the equilibrium between 70S ribosomes and their 50S and 30S subunits in favor of the free subunits, thus enhancing the availability of 30S subunits on which protein synthesis initiation begins. The sequence is that of Translation initiation factor IF-3 from Geobacter metallireducens (strain ATCC 53774 / DSM 7210 / GS-15).